The chain runs to 878 residues: Alanine--tRNA ligase (878 aa).

Zn(2+) contacts are provided by histidine 567, histidine 571, cysteine 669, and histidine 673.

Belongs to the class-II aminoacyl-tRNA synthetase family. Zn(2+) serves as cofactor.

The protein resides in the cytoplasm. It catalyses the reaction tRNA(Ala) + L-alanine + ATP = L-alanyl-tRNA(Ala) + AMP + diphosphate. In terms of biological role, catalyzes the attachment of alanine to tRNA(Ala) in a two-step reaction: alanine is first activated by ATP to form Ala-AMP and then transferred to the acceptor end of tRNA(Ala). Also edits incorrectly charged Ser-tRNA(Ala) and Gly-tRNA(Ala) via its editing domain. This Rickettsia massiliae (strain Mtu5) protein is Alanine--tRNA ligase.